A 583-amino-acid chain; its full sequence is Complement factor I (583 aa).

Positions 1 to 18 (MKLLHVFLLFLCFHLRFC) are cleaved as a signal peptide. Cystine bridges form between C33/C255, C43/C54, C48/C59, C61/C93, C67/C86, C75/C106, C141/C181, C154/C214, C186/C196, C229/C247, C241/C256, C259/C271, C266/C284, C278/C293, C327/C453, C365/C381, and C373/C444. The 54-residue stretch at 55–108 (IEGTCVCKLPYQCPKNGTAVCATNRRSFPTYCQQKSLECLHPGTKFLNNGTCTA) folds into the Kazal-like domain. Residue N70 is glycosylated (N-linked (GlcNAc...) asparagine). The N-linked (GlcNAc...) (complex) asparagine glycan is linked to N103. In terms of domain architecture, SRCR spans 114 to 212 (VSLKHGNTDS…TMGYQDFADV (99 aa)). An N-linked (GlcNAc...) asparagine glycan is attached at N177. 2 LDL-receptor class A domains span residues 213 to 257 (VCYT…LCCK) and 258 to 294 (ACQG…VGCA). Ca(2+) contacts are provided by K239, D242, I244, D246, D252, and E253. The Ca(2+) site is built by Y276, N279, E281, D283, D289, and E290. The Peptidase S1 domain maps to 340 to 574 (IVGGKRAQLG…YFDWISYHVG (235 aa)). Catalysis depends on charge relay system residues H380 and D429. N-linked (GlcNAc...) asparagine glycosylation is found at N464 and N494. 3 disulfide bridges follow: C467-C531, C495-C510, and C521-C550. The Charge relay system role is filled by S525. N-linked (GlcNAc...) asparagine glycosylation occurs at N536.

The protein belongs to the peptidase S1 family. In terms of assembly, heterodimer of a light and heavy chains; disulfide-linked. The fully processed and mature protein circulates as a zymogen, and is allosterically activated by substrate-induced remodeling of the active site. Interacts with C3b. Interacts with complement factor H. As to quaternary structure, (Microbial infection) Interacts with Staphylococcus aureus clumping factor A/ClfA; this interaction enhances cleavage of C3b into iC3b by CFI. Expressed in the liver by hepatocytes. Also present in other cells such as monocytes, fibroblasts or keratinocytes.

The protein resides in the secreted. The protein localises to the extracellular space. It carries out the reaction Inactivates complement subcomponents C3b, iC3b and C4b by proteolytic cleavage.. Trypsin-like serine protease that plays an essential role in regulating the immune response by controlling all complement pathways. Inhibits these pathways by cleaving three peptide bonds in the alpha-chain of C3b and two bonds in the alpha-chain of C4b thereby inactivating these proteins. Essential cofactors for these reactions include factor H and C4BP in the fluid phase and membrane cofactor protein/CD46 and CR1 on cell surfaces. The presence of these cofactors on healthy cells allows degradation of deposited C3b by CFI in order to prevent undesired complement activation, while in apoptotic cells or microbes, the absence of such cofactors leads to C3b-mediated complement activation and subsequent opsonization. The protein is Complement factor I (CFI) of Homo sapiens (Human).